The following is a 748-amino-acid chain: MAADVSVTHRPPLSPEAEAEAETPETVDRRTPEQELPPLDPEEIRKRLEHTERQFRNRRKILIRGLPGDVTNQEVHDLLSDYELKYCFVDKYKGTAFVTLLNGEQAEAAINTFHQSRLRERELSVQLQPTDALLCVANLPPSLTQAQFEELVRPFGSLERCFLVYSERTGHSKGYGFAEYMKKDSAARAKSDLLGKPLGPRTLYVHWTDAGQLTPALLHSRCLCVDHLPPGFNDVDALRQALSAVYTPTFCQLASGQDGQLKGFAVLEYETAEMAEAAQQRADGLALGGSHLRVSFCAPGPPGRSMLAALIAAQATALNRGKGLLPEPNILQLLNNLGPSASLQLLLNPLLHGGASGKQGLLGAPPAMPLLSGPALSTALLQLALQSQNQSQSQSQKKPGILGDSPLGTLQAGAQPSNSLLGELSAGGGLAPELPPRRGKPQPLLPPLLGPSGGDREPMGLGPPASQLTPPPAPMGLRGSSLRGLPKDSGPLPTPPGVSLLGEPPKDYRIPLNPYLNLHSLLPSSNLAGKETRGWGGSGRGRRPAEPPLPSPAVPGGGNASNNGSKAFPMKPRLLSPIASNRLPPEPGLPDSYSFDYPTDVGPRRLFSHPRESNLGAHGPSRHKMSPPPSSFSEPRSGGGSGGPLSHFYSGSPTSYFTSGLQAGLKQSHLNKAVGSSPMGSSEGLLGLGPGPNGHSHLLKTPLGGQKRSFSHLLPSPEPSPEGSYVGQHSQGLGGHYADSYLKRKRIF.

Positions 1 to 42 are disordered; it reads MAADVSVTHRPPLSPEAEAEAETPETVDRRTPEQELPPLDPE. At A2 the chain carries N-acetylalanine. S6 and S14 each carry phosphoserine. T31 carries the post-translational modification Phosphothreonine. The Nuclear localization signal motif lies at 45–60; that stretch reads RKRLEHTERQFRNRRK. RRM domains lie at 59-130, 132-210, and 221-299; these read RKIL…LQPT, ALLC…WTDA, and RCLC…FCAP. Residues 307–401 form an interaction with PTBP1 region; sequence LAALIAAQAT…QSQSQKKPGI (95 aa). Disordered stretches follow at residues 390–505, 525–647, and 672–731; these read QSQS…GEPP, SNLA…PLSH, and KAVG…QHSQ. Residue T469 is modified to Phosphothreonine. Residues S480, S576, S626, and S630 each carry the phosphoserine modification. Over residues 675 to 685 the composition is skewed to low complexity; it reads GSSPMGSSEGL. Phosphoserine occurs at positions 716 and 720. The Nuclear localization signal motif lies at 743 to 746; it reads KRKR.

In terms of assembly, interacts with PTBP1, RAVER2, VCL and ACTN1. Part of a complex containing RAVER1, VCL and ACTN1. As to expression, ubiquitous. Detected in aorta, brain, gut, heart, kidney, liver, spleen, uterus and skeletal muscle.

It is found in the nucleus. Its subcellular location is the cytoplasm. In terms of biological role, cooperates with PTBP1 to modulate regulated alternative splicing events. Promotes exon skipping. Cooperates with PTBP1 to modulate switching between mutually exclusive exons during maturation of the TPM1 pre-mRNA. In Rattus norvegicus (Rat), this protein is Ribonucleoprotein PTB-binding 1 (Raver1).